A 275-amino-acid polypeptide reads, in one-letter code: Thymidylate synthase (275 aa).

138-139 provides a ligand contact to dUMP; sequence RR. Residue C158 is the Nucleophile of the active site. Residues 178–181, N189, and 219–221 contribute to the dUMP site; these read RSCD and HIY. D181 is a binding site for (6R)-5,10-methylene-5,6,7,8-tetrahydrofolate. A274 provides a ligand contact to (6R)-5,10-methylene-5,6,7,8-tetrahydrofolate.

This sequence belongs to the thymidylate synthase family. Bacterial-type ThyA subfamily. In terms of assembly, homodimer.

The protein localises to the cytoplasm. The enzyme catalyses dUMP + (6R)-5,10-methylene-5,6,7,8-tetrahydrofolate = 7,8-dihydrofolate + dTMP. Its pathway is pyrimidine metabolism; dTTP biosynthesis. Catalyzes the reductive methylation of 2'-deoxyuridine-5'-monophosphate (dUMP) to 2'-deoxythymidine-5'-monophosphate (dTMP) while utilizing 5,10-methylenetetrahydrofolate (mTHF) as the methyl donor and reductant in the reaction, yielding dihydrofolate (DHF) as a by-product. This enzymatic reaction provides an intracellular de novo source of dTMP, an essential precursor for DNA biosynthesis. The sequence is that of Thymidylate synthase from Fusobacterium nucleatum subsp. nucleatum (strain ATCC 25586 / DSM 15643 / BCRC 10681 / CIP 101130 / JCM 8532 / KCTC 2640 / LMG 13131 / VPI 4355).